A 307-amino-acid polypeptide reads, in one-letter code: Ribonuclease Z (307 aa).

Residues His63, His65, Asp67, His68, His140, Asp211, and His269 each contribute to the Zn(2+) site. The active-site Proton acceptor is Asp67.

It belongs to the RNase Z family. As to quaternary structure, homodimer. Zn(2+) is required as a cofactor.

The catalysed reaction is Endonucleolytic cleavage of RNA, removing extra 3' nucleotides from tRNA precursor, generating 3' termini of tRNAs. A 3'-hydroxy group is left at the tRNA terminus and a 5'-phosphoryl group is left at the trailer molecule.. Functionally, zinc phosphodiesterase, which displays some tRNA 3'-processing endonuclease activity. Probably involved in tRNA maturation, by removing a 3'-trailer from precursor tRNA. This is Ribonuclease Z from Bacillus subtilis (strain 168).